The following is a 452-amino-acid chain: Pup--protein ligase (452 aa).

Residue glutamate 9 coordinates Mg(2+). Arginine 53 contacts ATP. Tyrosine 55 is a Mg(2+) binding site. Aspartate 57 serves as the catalytic Proton acceptor. Residue glutamate 63 participates in Mg(2+) binding. ATP contacts are provided by threonine 66 and tryptophan 419.

It belongs to the Pup ligase/Pup deamidase family. Pup-conjugating enzyme subfamily.

The enzyme catalyses ATP + [prokaryotic ubiquitin-like protein]-L-glutamate + [protein]-L-lysine = ADP + phosphate + N(6)-([prokaryotic ubiquitin-like protein]-gamma-L-glutamyl)-[protein]-L-lysine.. It participates in protein degradation; proteasomal Pup-dependent pathway. Its pathway is protein modification; protein pupylation. Functionally, catalyzes the covalent attachment of the prokaryotic ubiquitin-like protein modifier Pup to the proteasomal substrate proteins, thereby targeting them for proteasomal degradation. This tagging system is termed pupylation. The ligation reaction involves the side-chain carboxylate of the C-terminal glutamate of Pup and the side-chain amino group of a substrate lysine. In Saccharomonospora viridis (strain ATCC 15386 / DSM 43017 / JCM 3036 / CCUG 5913 / NBRC 12207 / NCIMB 9602 / P101) (Thermoactinomyces viridis), this protein is Pup--protein ligase.